The primary structure comprises 1584 residues: Dicer-like protein 1 (1584 aa).

Residues 31-60 (EDVVSDNDDRGNASDVESEDGVKRWTVNPE) are disordered. Residues 129–310 (LFERAKQQNT…RAAAELEALL (182 aa)) form the Helicase ATP-binding domain. 142–149 (LDTGSGKT) is a binding site for ATP. A DEAH box motif is present at residues 255–258 (DEAH). Residues 448 to 621 (KVIMLVRILR…EALPEDRKLT (174 aa)) enclose the Helicase C-terminal domain. The 91-residue stretch at 654-744 (SLVCLANFTA…QSVFTKQLPE (91 aa)) folds into the Dicer dsRNA-binding fold domain. Residues 894–1028 (KALAYVSENE…LILEPMRISP (135 aa)) enclose the PAZ domain. 2 RNase III domains span residues 1052–1207 (VALD…LTGQ) and 1258–1424 (AKKF…VDSE). Residues E1298, D1410, and E1413 each coordinate Mg(2+). The DRBM domain maps to 1458–1545 (TFVANMMAHK…AKKAIKLLEG (88 aa)). Zn(2+) is bound by residues C1470, H1516, C1557, and C1559.

The protein belongs to the helicase family. Dicer subfamily. Mg(2+) serves as cofactor. Requires Mn(2+) as cofactor.

Functionally, dicer-like endonuclease involved in cleaving double-stranded RNA in the RNA interference (RNAi) pathway. Produces 21 to 25 bp dsRNAs (siRNAs) which target the selective destruction of homologous RNAs leading to sequence-specific suppression of gene expression, called post-transcriptional gene silencing (PTGS). Part of a broad host defense response against viral infection and transposons. Controls the expression of the non-LTR retrotransposon Tad in the African strain, Adiomopoume. This is Dicer-like protein 1 (dcl-1) from Neurospora crassa (strain ATCC 24698 / 74-OR23-1A / CBS 708.71 / DSM 1257 / FGSC 987).